A 56-amino-acid polypeptide reads, in one-letter code: Large ribosomal subunit protein bL32 (56 aa).

Residues 1 to 16 (MAVQKSKKSRARRGMR) are compositionally biased toward basic residues. Positions 1-56 (MAVQKSKKSRARRGMRRSHDAISGPSLTVDQTSGETHRRHHVTADGYYKGVQVISK) are disordered. Polar residues predominate over residues 25–34 (PSLTVDQTSG).

This sequence belongs to the bacterial ribosomal protein bL32 family.

The sequence is that of Large ribosomal subunit protein bL32 from Pseudoalteromonas translucida (strain TAC 125).